The sequence spans 616 residues: MCGIVGYVGTDKSLEVLLGGLKRLEYRGYDSAGIAVIAPDGSLATAKRAGKLDVLTDELQQHPIPDGGTGIGHTRWATHGGPTDCNAHPHLGDDGRLAVIHNGIIENFATLRDELLAEEFTFESETDTEVAAVLLGREYRAAGSLSEAFQRVVSRLEGAFTLLALHQDQPHVVVGARRNSPLVIGLGEGENFLGSDVAAFVEHTQRALAIGQDQIVTITPEQVTVTDFAGAPVEVEPFDVAWDATAAEKGGWPSFMAKEIAEEPDAVANTLRGRAADGAVHIPELDALGDEFFLGIDQITIVACGTAAYAGLVGSYAIEKWARVPVTVELSHEFRYREPVISGGTLIVSISQSGETMDTLMAVKYAREAGAKAISVCNTQGATIPRESDAALYTHAGPEVAVASTKAFVGQIAALYLFGLSLARVRGTLSAAQQRDAVAELFAVPEKIRAVLESKDTIAQLAHWMSDTRSVLFLGRHVGYPIALEGALKLKELAYIHAEGFAAGELKHGPIALIEPGQPVFVVVPSPRWSDELHKKVVSNIQEIRARGARVIAIAEAGDAAVLPFADEVIRIPLAAPLFEPLLSVIPLQIFAMELAVAKGLDVDQPRNLAKSVTVE.

The Nucleophile; for GATase activity role is filled by Cys-2. Positions 2-221 (CGIVGYVGTD…QDQIVTITPE (220 aa)) constitute a Glutamine amidotransferase type-2 domain. 2 SIS domains span residues 288 to 428 (LGDE…VRGT) and 461 to 606 (LAHW…VDQP). The active-site For Fru-6P isomerization activity is Lys-611.

Homodimer.

It localises to the cytoplasm. It catalyses the reaction D-fructose 6-phosphate + L-glutamine = D-glucosamine 6-phosphate + L-glutamate. Its function is as follows. Catalyzes the first step in hexosamine metabolism, converting fructose-6P into glucosamine-6P using glutamine as a nitrogen source. The polypeptide is Glutamine--fructose-6-phosphate aminotransferase [isomerizing] (Leifsonia xyli subsp. xyli (strain CTCB07)).